Here is a 217-residue protein sequence, read N- to C-terminus: Monomethylamine corrinoid protein 1 (217 aa).

The 91-residue stretch at 1-91 (MANQEIFDKL…ELEKNKKEGE (91 aa)) folds into the B12-binding N-terminal domain. Positions 93-217 (AGLAITFVAE…AAKVALEVMK (125 aa)) constitute a B12-binding domain. Histidine 106 is a binding site for methylcob(III)alamin.

Can form a complex with MtmB.

It participates in one-carbon metabolism; methanogenesis from methylamine. Acts as a methyl group carrier between MtmB and MtbA. This Methanosarcina barkeri protein is Monomethylamine corrinoid protein 1 (mtmC1).